The sequence spans 166 residues: Crossover junction endodeoxyribonuclease RuvC (166 aa).

Catalysis depends on residues Asp-12, Glu-71, and Asp-143. Mg(2+) contacts are provided by Asp-12, Glu-71, and Asp-143.

Belongs to the RuvC family. As to quaternary structure, homodimer which binds Holliday junction (HJ) DNA. The HJ becomes 2-fold symmetrical on binding to RuvC with unstacked arms; it has a different conformation from HJ DNA in complex with RuvA. In the full resolvosome a probable DNA-RuvA(4)-RuvB(12)-RuvC(2) complex forms which resolves the HJ. It depends on Mg(2+) as a cofactor.

It localises to the cytoplasm. The catalysed reaction is Endonucleolytic cleavage at a junction such as a reciprocal single-stranded crossover between two homologous DNA duplexes (Holliday junction).. The RuvA-RuvB-RuvC complex processes Holliday junction (HJ) DNA during genetic recombination and DNA repair. Endonuclease that resolves HJ intermediates. Cleaves cruciform DNA by making single-stranded nicks across the HJ at symmetrical positions within the homologous arms, yielding a 5'-phosphate and a 3'-hydroxyl group; requires a central core of homology in the junction. The consensus cleavage sequence is 5'-(A/T)TT(C/G)-3'. Cleavage occurs on the 3'-side of the TT dinucleotide at the point of strand exchange. HJ branch migration catalyzed by RuvA-RuvB allows RuvC to scan DNA until it finds its consensus sequence, where it cleaves and resolves the cruciform DNA. The sequence is that of Crossover junction endodeoxyribonuclease RuvC from Oleidesulfovibrio alaskensis (strain ATCC BAA-1058 / DSM 17464 / G20) (Desulfovibrio alaskensis).